A 394-amino-acid polypeptide reads, in one-letter code: 2-oxoglutarate and iron-dependent oxygenase domain-containing protein CP2 (394 aa).

Residues 1–35 (MSSEQREGSQETTTTTVEGNGTIAGQNSHSAAPTT) form a disordered region. Residues 17–35 (VEGNGTIAGQNSHSAAPTT) show a composition bias toward polar residues. Residues 248–347 (DSHHGFVVEY…RVNMLLWCRS (100 aa)) enclose the Fe2OG dioxygenase domain. Residues histidine 268, aspartate 270, and histidine 328 each contribute to the Fe cation site. Arginine 338 is a binding site for 2-oxoglutarate.

It depends on Fe(2+) as a cofactor. Requires L-ascorbate as cofactor. As to expression, expressed in roots, cotyledons, rosette leaves, cauline leaves, inflorescences and siliques.

The protein localises to the nucleus. The protein resides in the nucleoplasm. Functionally, participates in the epigenetic repression of flowering genes in association with ICU11. Functions in the repression of several members of the MADS-box transcription factors family, including SEP3, during vegetative development via histone modification. The chain is 2-oxoglutarate and iron-dependent oxygenase domain-containing protein CP2 from Arabidopsis thaliana (Mouse-ear cress).